The primary structure comprises 177 residues: Small ribosomal subunit protein uS5 (177 aa).

The region spanning 19-82 (FIEKLVAIKR…DQAQKQMIKV (64 aa)) is the S5 DRBM domain.

This sequence belongs to the universal ribosomal protein uS5 family. Part of the 30S ribosomal subunit. Contacts proteins S4 and S8.

Functionally, with S4 and S12 plays an important role in translational accuracy. In terms of biological role, located at the back of the 30S subunit body where it stabilizes the conformation of the head with respect to the body. In Magnetococcus marinus (strain ATCC BAA-1437 / JCM 17883 / MC-1), this protein is Small ribosomal subunit protein uS5.